Here is a 100-residue protein sequence, read N- to C-terminus: Large ribosomal subunit protein eL21 (100 aa).

The tract at residues 1–21 (MVKRTHGYRYKSRKLLRKKPR) is disordered.

It belongs to the eukaryotic ribosomal protein eL21 family.

The chain is Large ribosomal subunit protein eL21 from Pyrobaculum islandicum (strain DSM 4184 / JCM 9189 / GEO3).